The chain runs to 209 residues: 3-demethoxyubiquinol 3-hydroxylase (209 aa).

The Fe cation site is built by Glu58, Glu88, His91, Glu140, Glu172, and His175.

The protein belongs to the COQ7 family. Fe cation is required as a cofactor.

It localises to the cell membrane. The enzyme catalyses a 5-methoxy-2-methyl-3-(all-trans-polyprenyl)benzene-1,4-diol + AH2 + O2 = a 3-demethylubiquinol + A + H2O. It functions in the pathway cofactor biosynthesis; ubiquinone biosynthesis. Catalyzes the hydroxylation of 2-nonaprenyl-3-methyl-6-methoxy-1,4-benzoquinol during ubiquinone biosynthesis. The polypeptide is 3-demethoxyubiquinol 3-hydroxylase (Polynucleobacter asymbioticus (strain DSM 18221 / CIP 109841 / QLW-P1DMWA-1) (Polynucleobacter necessarius subsp. asymbioticus)).